The sequence spans 620 residues: Chaperone protein HtpG (620 aa).

An a; substrate-binding region spans residues 1 to 334 (MTTTDTAPQT…SEDLPLNLSR (334 aa)). A b region spans residues 335–548 (EMLQNNPQLV…GQGPDRALER (214 aa)). The c stretch occupies residues 549-620 (MLAQQNRGGA…RINRLVLRAL (72 aa)).

Belongs to the heat shock protein 90 family. In terms of assembly, homodimer.

The protein localises to the cytoplasm. Functionally, molecular chaperone. Has ATPase activity. In Rhodopseudomonas palustris (strain BisA53), this protein is Chaperone protein HtpG.